The chain runs to 757 residues: Inhibitor of nuclear factor kappa-B kinase subunit beta (757 aa).

Residues 15 to 300 form the Protein kinase domain; it reads WEMKERLGTG…DPQYGPNGCF (286 aa). ATP contacts are provided by residues 21–29 and Lys-44; that span reads LGTGGFGNV. Asp-145 (proton acceptor) is an active-site residue. Residue Lys-163 forms a Glycyl lysine isopeptide (Lys-Gly) (interchain with G-Cter in ubiquitin) linkage. At Ser-177 the chain carries Phosphoserine; by TBK1 and PKC/PRKCZ. At Cys-179 the chain carries S-nitrosocysteine. Ser-181 is modified (phosphoserine; by TBK1, PKC/PRKCZ and PDPK1). Pro-191 is subject to Hydroxyproline. The segment at 458 to 479 is leucine-zipper; sequence LLRNNSCLSKMKNAMASTAQQL. Phosphoserine; by autocatalysis is present on Ser-670. The residue at position 672 (Ser-672) is a Phosphoserine. Ser-675, Ser-682, Ser-689, Ser-692, Ser-697, Ser-705, Ser-733, and Ser-740 each carry phosphoserine; by autocatalysis. Residues 682 to 703 are disordered; the sequence is SHPGHLMSQPSSACDSLPDSDK. The tract at residues 737–742 is NEMO-binding; it reads LDWSWL.

This sequence belongs to the protein kinase superfamily. Ser/Thr protein kinase family. I-kappa-B kinase subfamily. Component of the I-kappa-B-kinase (IKK) core complex consisting of CHUK, IKBKB and IKBKG; probably four alpha/CHUK-beta/IKBKB dimers are associated with four gamma/IKBKG subunits. The IKK core complex seems to associate with regulatory or adapter proteins to form a IKK-signalosome holo-complex. The IKK complex associates with TERF2IP/RAP1, leading to promote IKK-mediated phosphorylation of RELA/p65. Part of a complex composed of NCOA2, NCOA3, CHUK/IKKA, IKBKB, IKBKG and CREBBP. Part of a 70-90 kDa complex at least consisting of CHUK/IKKA, IKBKB, NFKBIA, RELA, ELP1 and MAP3K14. Found in a membrane raft complex, at least composed of BCL10, CARD11, DPP4 and IKBKB. Interacts with SQSTM1 through PRKCZ or PRKCI. Forms an NGF-induced complex with IKBKB, PRKCI and TRAF6. May interact with MAVS/IPS1. Interacts with NALP2. Interacts with TICAM1. Interacts with FAF1; the interaction disrupts the IKK complex formation. Interacts with ATM. Part of a ternary complex consisting of TANK, IKBKB and IKBKG. Interacts with NIBP; the interaction is direct. Interacts with ARRB1 and ARRB2. Interacts with TRIM21. Interacts with NLRC5; prevents IKBKB phosphorylation and kinase activity. Interacts with PDPK1. Interacts with EIF2AK2/PKR. The phosphorylated form interacts with PPM1A and PPM1B. Interacts with ZNF268 isoform 2; the interaction is further increased in a TNF-alpha-dependent manner. Interacts with IKBKE. Interacts with ZC3H12A. Interacts with AKAP13. Interacts with LRRC14; disrupts IKBKB-IKBKG interaction preventing I-kappa-B-kinase (IKK) core complex formation and leading to a decrease of IKBKB phosphorylation and NF-kappaB activation. Interacts with SASH1. Interacts with ARFIP2. Interacts with FKBP5. Post-translationally, upon cytokine stimulation, phosphorylated on Ser-177 and Ser-181 by MEKK1 and/or MAP3K14/NIK as well as TBK1 and PRKCZ; which enhances activity. Phosphorylated by MAP3K7/TAK1 in response to NOD1 and NOD2 signaling, promoting activation and phosphorylation of NF-kappa-B inhibitors, leading to NF-kappa-B activation. Once activated, autophosphorylates on the C-terminal serine cluster; which decreases activity and prevents prolonged activation of the inflammatory response. Phosphorylated by the IKK-related kinases TBK1 and IKBKE, which is associated with reduced CHUK/IKKA and IKBKB activity and NF-kappa-B-dependent gene transcription. Dephosphorylated at Ser-177 and Ser-181 by PPM1A and PPM1B. Ubiquitinated. Monoubiquitination involves TRIM21 that leads to inhibition of Tax-induced NF-kappa-B signaling. 'Ser-163' may not serve as a monoubiquitination site. Ubiquitination on 'Ser-163' may modulate phosphorylation on C-terminal serine residues. In terms of processing, hydroxylated by PHD1/EGLN2, loss of hydroxylation under hypoxic conditions results in activation of NF-kappa-B.

It localises to the cytoplasm. Its subcellular location is the nucleus. The protein resides in the membrane raft. It catalyses the reaction L-seryl-[I-kappa-B protein] + ATP = O-phospho-L-seryl-[I-kappa-B protein] + ADP + H(+). The enzyme catalyses L-seryl-[protein] + ATP = O-phospho-L-seryl-[protein] + ADP + H(+). The catalysed reaction is L-threonyl-[protein] + ATP = O-phospho-L-threonyl-[protein] + ADP + H(+). Its function is as follows. Serine kinase that plays an essential role in the NF-kappa-B signaling pathway which is activated by multiple stimuli such as inflammatory cytokines, bacterial or viral products, DNA damages or other cellular stresses. Acts as a part of the canonical IKK complex in the conventional pathway of NF-kappa-B activation. Phosphorylates inhibitors of NF-kappa-B on 2 critical serine residues. These modifications allow polyubiquitination of the inhibitors and subsequent degradation by the proteasome. In turn, free NF-kappa-B is translocated into the nucleus and activates the transcription of hundreds of genes involved in immune response, growth control, or protection against apoptosis. In addition to the NF-kappa-B inhibitors, phosphorylates several other components of the signaling pathway including NEMO/IKBKG, NF-kappa-B subunits RELA and NFKB1, as well as IKK-related kinases TBK1 and IKBKE. IKK-related kinase phosphorylations may prevent the overproduction of inflammatory mediators since they exert a negative regulation on canonical IKKs. Phosphorylates FOXO3, mediating the TNF-dependent inactivation of this pro-apoptotic transcription factor. Also phosphorylates other substrates including NAA10, NCOA3, BCL10 and IRS1. Phosphorylates RIPK1 at 'Ser-25' which represses its kinase activity and consequently prevents TNF-mediated RIPK1-dependent cell death. Phosphorylates the C-terminus of IRF5, stimulating IRF5 homodimerization and translocation into the nucleus. This chain is Inhibitor of nuclear factor kappa-B kinase subunit beta (Ikbkb), found in Rattus norvegicus (Rat).